A 465-amino-acid chain; its full sequence is uncharacterized protein (465 aa).

Disordered regions lie at residues 95 to 173 (STST…RKDP), 407 to 426 (QEMEGKRNESKSDDEGKSDK), and 443 to 465 (ANPIETARMARRNRRSKGSSSKK). Residues 118–137 (KTGSKKVTRSKKSKKTKRRS) show a composition bias toward basic residues. Low complexity predominate over residues 138-150 (STTVTTTTISNSK). Basic and acidic residues predominate over residues 153-173 (TPDKDKDSKDQRKQRTKRKDP). Residues 451 to 465 (MARRNRRSKGSSSKK) show a composition bias toward basic residues.

This is an uncharacterized protein from Caenorhabditis elegans.